Consider the following 821-residue polypeptide: Fibroblast growth factor receptor 2 (821 aa).

The signal sequence occupies residues 1 to 21 (MVSWGRFICLVLVTMATLSLA). Topologically, residues 22–377 (RPSFSLVEDT…EITASPDYLE (356 aa)) are extracellular. The 101-residue stretch at 25-125 (FSLVEDTTLE…ETWIFMVNVT (101 aa)) folds into the Ig-like C2-type 1 domain. Cys-62 and Cys-107 form a disulfide bridge. Asn-83 and Asn-123 each carry an N-linked (GlcNAc...) asparagine glycan. Residues 129–151 (SSGDDEDDTDSSEDVVSENRSNQ) are disordered. Acidic residues predominate over residues 131-144 (GDDEDDTDSSEDVV). N-linked (GlcNAc...) asparagine glycosylation is present at Asn-147. Ig-like C2-type domains are found at residues 154–247 (PYWT…YHLD) and 256–358 (PILQ…AWLT). Positions 161 to 178 (KMEKRLHACPAANTVKFR) are heparin-binding. Cys-179 and Cys-231 are disulfide-bonded. N-linked (GlcNAc...) asparagine glycosylation is found at Asn-228, Asn-241, Asn-265, Asn-297, Asn-318, and Asn-331. A disulfide bridge connects residues Cys-278 and Cys-342. Residues 378–398 (IAIYCIGVFLIACMVVTVIFC) traverse the membrane as a helical segment. The Cytoplasmic portion of the chain corresponds to 399 to 821 (RMKTTTKKPD…YPHINGSVKT (423 aa)). Phosphotyrosine; by autocatalysis is present on Tyr-466. The Protein kinase domain occupies 481–770 (LTLGKPLGEG…LTLTTNEEYL (290 aa)). ATP contacts are provided by residues 487-495 (LGEGCFGQV), Lys-517, 565-567 (EYA), and Asn-571. 2 positions are modified to phosphotyrosine; by autocatalysis: Tyr-586 and Tyr-588. Asp-626 functions as the Proton acceptor in the catalytic mechanism. Phosphotyrosine; by autocatalysis is present on residues Tyr-656, Tyr-657, and Tyr-769. Ser-780 bears the Phosphoserine mark.

This sequence belongs to the protein kinase superfamily. Tyr protein kinase family. Fibroblast growth factor receptor subfamily. In terms of assembly, monomer. Homodimer after ligand binding. Interacts predominantly with FGF1 and FGF2, but can also interact with FGF3, FGF4, FGF6, FGF7, FGF8, FGF9, FGF10, FGF17, FGF18 and FGF22 (in vitro). Ligand specificity is determined by tissue-specific expression of isoforms, and differences in the third Ig-like domain are crucial for ligand specificity. Affinity for fibroblast growth factors (FGFs) is increased by heparan sulfate glycosaminoglycans that function as coreceptors. Likewise, KLB increases the affinity for FGF19 and FGF21. Interacts with PLCG1. Interacts with GRB2 and PAK4. Interacts with FLRT2. In terms of processing, autophosphorylated. Binding of FGF family members together with heparan sulfate proteoglycan or heparin promotes receptor dimerization and autophosphorylation on tyrosine residues. Autophosphorylation occurs in trans between the two FGFR molecules present in the dimer. Post-translationally, N-glycosylated in the endoplasmic reticulum. The N-glycan chains undergo further maturation to an Endo H-resistant form in the Golgi apparatus. Ubiquitinated. FGFR2 is rapidly ubiquitinated after autophosphorylation, leading to internalization and degradation. Subject to degradation both in lysosomes and by the proteasome.

The protein resides in the cell membrane. The protein localises to the golgi apparatus. Its subcellular location is the cytoplasmic vesicle. The enzyme catalyses L-tyrosyl-[protein] + ATP = O-phospho-L-tyrosyl-[protein] + ADP + H(+). Its activity is regulated as follows. Present in an inactive conformation in the absence of bound ligand. Ligand binding leads to dimerization and activation by autophosphorylation on tyrosine residues. In terms of biological role, tyrosine-protein kinase that acts as a cell-surface receptor for fibroblast growth factors and plays an essential role in the regulation of cell proliferation, differentiation, migration and apoptosis, and in the regulation of embryonic development. Required for normal embryonic patterning, trophoblast function, limb bud development, lung morphogenesis, osteogenesis and skin development. Plays an essential role in the regulation of osteoblast differentiation, proliferation and apoptosis, and is required for normal skeleton development. Promotes cell proliferation in keratinocytes and immature osteoblasts, but promotes apoptosis in differentiated osteoblasts. Phosphorylates PLCG1, FRS2 and PAK4. Ligand binding leads to the activation of several signaling cascades. Activation of PLCG1 leads to the production of the cellular signaling molecules diacylglycerol and inositol 1,4,5-trisphosphate. Phosphorylation of FRS2 triggers recruitment of GRB2, GAB1, PIK3R1 and SOS1, and mediates activation of RAS, MAPK1/ERK2, MAPK3/ERK1 and the MAP kinase signaling pathway, as well as of the AKT1 signaling pathway. FGFR2 signaling is down-regulated by ubiquitination, internalization and degradation. Mutations that lead to constitutive kinase activation or impair normal FGFR2 maturation, internalization and degradation lead to aberrant signaling. Over-expressed FGFR2 promotes activation of STAT1. The chain is Fibroblast growth factor receptor 2 (Fgfr2) from Mus musculus (Mouse).